The sequence spans 223 residues: Phage shock protein A homolog (223 aa).

Positions 29–185 (IDQALRDMRS…AGMEDRNKAM (157 aa)) form a coiled coil.

This sequence belongs to the PspA/Vipp/IM30 family.

The polypeptide is Phage shock protein A homolog (Deinococcus radiodurans (strain ATCC 13939 / DSM 20539 / JCM 16871 / CCUG 27074 / LMG 4051 / NBRC 15346 / NCIMB 9279 / VKM B-1422 / R1)).